The following is a 540-amino-acid chain: Alanine aminotransferase 2 (540 aa).

Lys358 is subject to N6-(pyridoxal phosphate)lysine.

It belongs to the class-I pyridoxal-phosphate-dependent aminotransferase family. Alanine aminotransferase subfamily. Homodimer. The cofactor is pyridoxal 5'-phosphate.

It carries out the reaction L-alanine + 2-oxoglutarate = pyruvate + L-glutamate. It participates in amino-acid degradation; L-alanine degradation via transaminase pathway; pyruvate from L-alanine: step 1/1. Its function is as follows. Catalyzes the reversible transamination between alanine and 2-oxoglutarate to form pyruvate and glutamate. The polypeptide is Alanine aminotransferase 2 (gpt2) (Xenopus laevis (African clawed frog)).